The sequence spans 113 residues: Ribonuclease P protein component (113 aa).

Belongs to the RnpA family. As to quaternary structure, consists of a catalytic RNA component (M1 or rnpB) and a protein subunit.

The catalysed reaction is Endonucleolytic cleavage of RNA, removing 5'-extranucleotides from tRNA precursor.. Its function is as follows. RNaseP catalyzes the removal of the 5'-leader sequence from pre-tRNA to produce the mature 5'-terminus. It can also cleave other RNA substrates such as 4.5S RNA. The protein component plays an auxiliary but essential role in vivo by binding to the 5'-leader sequence and broadening the substrate specificity of the ribozyme. This chain is Ribonuclease P protein component, found in Ligilactobacillus salivarius (strain UCC118) (Lactobacillus salivarius).